The following is a 319-amino-acid chain: Phosphate transport system permease protein PstC (319 aa).

The next 7 helical transmembrane spans lie at 25 to 45, 84 to 104, 120 to 140, 141 to 161, 169 to 189, 233 to 253, and 289 to 309; these read AAAA…FLLL, VLSS…IAVF, MVDL…VFVL, APKL…LFLF, AGGG…LPIV, AAAM…LIIL, and GAYI…NAVA. Positions 80–309 constitute an ABC transmembrane type-1 domain; the sequence is FMVTVLSSIC…FLTFVVNAVA (230 aa).

This sequence belongs to the binding-protein-dependent transport system permease family. CysTW subfamily.

The protein localises to the cell membrane. Functionally, part of a binding-protein-dependent transport system for phosphate; probably responsible for the translocation of the substrate across the membrane. The polypeptide is Phosphate transport system permease protein PstC (pstC) (Mycobacterium leprae (strain TN)).